The primary structure comprises 184 residues: Peptide deformylase (184 aa).

2 residues coordinate Fe cation: C92 and H134. E135 is an active-site residue. Residue H138 participates in Fe cation binding.

It belongs to the polypeptide deformylase family. Fe(2+) is required as a cofactor.

It catalyses the reaction N-terminal N-formyl-L-methionyl-[peptide] + H2O = N-terminal L-methionyl-[peptide] + formate. In terms of biological role, removes the formyl group from the N-terminal Met of newly synthesized proteins. Requires at least a dipeptide for an efficient rate of reaction. N-terminal L-methionine is a prerequisite for activity but the enzyme has broad specificity at other positions. The protein is Peptide deformylase of Psychrobacter cryohalolentis (strain ATCC BAA-1226 / DSM 17306 / VKM B-2378 / K5).